Consider the following 119-residue polypeptide: Autophagy-related protein 8 (119 aa).

Glycine 116 carries the Phosphatidylethanolamine amidated glycine lipid modification. Residues 117–119 constitute a propeptide, removed in mature form; that stretch reads EAL.

This sequence belongs to the ATG8 family. As to quaternary structure, conjugation to phosphatidylethanolamine (PE) leads to homodimerization. Interacts with ATG1, ATG3, ATG4, ATG7 and ATG12. In terms of processing, the C-terminal Glu-117, Ala-118 and Leu-119 residues of ATG8 are removed by ATG4 to expose Gly-116 at the C-terminus. This Gly-116 forms then a thioester bond with ATG7 (E1-like activating enzyme) before being transferred to ATG3 (the specific E2 conjugating enzyme), in order to be finally amidated with phosphatidylethanolamine. This lipid modification anchors ATG8 to membranes and can be reversed by ATG4, releasing soluble ATG8.

The protein localises to the cytoplasmic vesicle. Its subcellular location is the cvt vesicle membrane. It is found in the autophagosome membrane. The protein resides in the vacuole membrane. Functionally, ubiquitin-like modifier involved in cytoplasm to vacuole transport (Cvt) vesicles and autophagosome formation. With ATG4, mediates the delivery of the vesicles and autophagosomes to the vacuole via the microtubule cytoskeleton. Required for selective autophagic degradation of the nucleus (nucleophagy) as well as for mitophagy which contributes to regulate mitochondrial quantity and quality by eliminating the mitochondria to a basal level to fulfill cellular energy requirements and preventing excess ROS production. Also participates in membrane fusion events that take place in the early secretory pathway. Also involved in endoplasmic reticulum-specific autophagic process and is essential for the survival of cells subjected to severe ER stress. The ATG8-PE conjugate mediates tethering between adjacent membranes and stimulates membrane hemifusion, leading to expansion of the autophagosomal membrane during autophagy. Moreover not only conjugation, but also subsequent ATG8-PE deconjugation is an important step required to facilitate multiple events during macroautophagy, and especially for efficient autophagosome biogenesis, the assembly of ATG9-containing tubulovesicular clusters into phagophores/autophagosomes, and for the disassembly of PAS-associated ATG components. Autophagy is required for conidiation, aerial mycelial growth, and pseudothecia formation, but not for host invasion. The protein is Autophagy-related protein 8 of Cochliobolus heterostrophus (strain C4 / ATCC 48331 / race T) (Southern corn leaf blight fungus).